Here is a 252-residue protein sequence, read N- to C-terminus: 5'-nucleotidase SurE (252 aa).

D8, D9, S39, and N91 together coordinate a divalent metal cation.

The protein belongs to the SurE nucleotidase family. Requires a divalent metal cation as cofactor.

It is found in the cytoplasm. The catalysed reaction is a ribonucleoside 5'-phosphate + H2O = a ribonucleoside + phosphate. Nucleotidase that shows phosphatase activity on nucleoside 5'-monophosphates. This Bordetella avium (strain 197N) protein is 5'-nucleotidase SurE.